The primary structure comprises 257 residues: Short chain dehydrogenase prhI (257 aa).

The chain crosses the membrane as a helical span at residues 7–29; sequence HVVIITGSSSGIGLAASTLALAS. Ile11 contacts NADP(+). N-linked (GlcNAc...) asparagine glycosylation occurs at Asn50. NADP(+) is bound at residue Asp57. N-linked (GlcNAc...) asparagine glycosylation is found at Asn92 and Asn110. Arg119, Tyr151, Lys155, and Val184 together coordinate NADP(+). Residue Tyr151 is the Proton acceptor of the active site. The active-site Lowers pKa of active site Tyr is Lys155.

This sequence belongs to the short-chain dehydrogenases/reductases (SDR) family.

The protein resides in the membrane. It catalyses the reaction protoaustinoid A + A = protoaustinoid B + AH2. It functions in the pathway secondary metabolite biosynthesis; terpenoid biosynthesis. Short chain dehydrogenase; part of the gene cluster that mediates the biosynthesis of paraherquonin, a meroterpenoid with a unique, highly congested hexacyclic molecular architecture. The first step of the pathway is the synthesis of 3,5-dimethylorsellinic acid (DMOA) by the polyketide synthase prhL. Synthesis of DMOA is followed by farnesylation by the prenyltransferase prhE, methylesterification by the methyl-transferase prhM, epoxidation of the prenyl chain by the flavin-dependent monooxygenase prhF, and cyclization of the farnesyl moiety by the terpene cyclase prhH, to yield the tetracyclic intermediate, protoaustinoid A. The short chain dehydrogenase prhI then oxidizes the C-3 alcohol group of the terpene cyclase product to transform protoaustinoid A into protoaustinoid B. The FAD-binding monooxygenase prhJ catalyzes the oxidation of protoaustinoid B into preaustinoid A which is further oxidized into preaustinoid A1 by FAD-binding monooxygenase phrK. Finally, prhA leads to berkeleydione via the berkeleyone B intermediate. PrhA is a multifunctional dioxygenase that first desaturates at C5-C6 to form berkeleyone B, followed by rearrangement of the A/B-ring to form the cycloheptadiene moiety in berkeleydione. Berkeleydione serves as the key intermediate for the biosynthesis of paraherquonin as well as many other meroterpenoids. The cytochrome P450 monooxygenases prhB, prhD, and prhN, as well as the isomerase prhC, are probably involved in the late stage of paraherquonin biosynthesis, after the production of berkeleydione. Especially prhC might be a multifunctional enzyme that catalyzes the D-ring expansion via intramolecular methoxy rearrangement, as well as the hydrolysis of the expanded D-ring. This is Short chain dehydrogenase prhI from Penicillium brasilianum.